A 1268-amino-acid polypeptide reads, in one-letter code: SR-related and CTD-associated factor 8 (1268 aa).

A CID domain is found at 1–139 (MEAVKTFNSE…PLLDMAAGIP (139 aa)). Position 6 is a phosphothreonine (threonine 6). Lysine 18 participates in a covalent cross-link: Glycyl lysine isopeptide (Lys-Gly) (interchain with G-Cter in SUMO1). Positions 270–283 (GEDSEHSEESKKEM) are enriched in basic and acidic residues. 3 disordered regions span residues 270–290 (GEDSEHSEESKKEMPTPQLSH), 322–355 (QQQPQKVTPQDSQEGTFGSEHSASPSQGSSQQHF), and 385–469 (EIFE…PVRS). Serine 273 bears the Phosphoserine mark. Positions 327–354 (KVTPQDSQEGTFGSEHSASPSQGSSQQH) are enriched in polar residues. A compositionally biased stretch (basic residues) spans 394–443 (VAVRSRSRTHSRSRSRSPRKRRSRSRSGSRKRKHRKRSRSHSREKKRKAS). Residues 447–461 (SSERRAREREKERQK) show a composition bias toward basic and acidic residues. Positions 477–551 (TTLWVGQVDK…KVIKIAWALN (75 aa)) constitute an RRM domain. Residue serine 617 is modified to Phosphoserine. The segment at 776–807 (QIPSGENTRPVIPSDIPSSAAMLAQPPGASST) is disordered. Arginine 915, arginine 925, and arginine 936 each carry asymmetric dimethylarginine. 2 disordered regions span residues 984 to 1012 (PGRPSIDNVPNPDKRIPLGNDNIQQEGDR) and 1040 to 1065 (RLDPREGPGRPPLDARDHFGRPPVDM). Arginine 1071 is subject to Asymmetric dimethylarginine. The segment at 1199-1268 (ATSQRKGDNV…VVESTETEGT (70 aa)) is disordered. Over residues 1249–1262 (GTVAGVESEAVVES) the composition is skewed to low complexity.

Interacts with POLR2A; via C-terminal heptapeptide repeat domain (CTD) phosphorylated at 'Ser-2' and 'Ser-5'. Identified in a complex with CDC5L and other spliceosomal proteins.

The protein localises to the nucleus. It is found in the nucleus matrix. Anti-terminator protein required to prevent early mRNA termination during transcription. Together with SCAF4, acts by suppressing the use of early, alternative poly(A) sites, thereby preventing the accumulation of non-functional truncated proteins. Mechanistically, associates with the phosphorylated C-terminal heptapeptide repeat domain (CTD) of the largest RNA polymerase II subunit (POLR2A), and subsequently binds nascent RNA upstream of early polyadenylation sites to prevent premature mRNA transcript cleavage and polyadenylation. Independently of SCAF4, also acts as a positive regulator of transcript elongation. The protein is SR-related and CTD-associated factor 8 of Mus musculus (Mouse).